Here is a 1162-residue protein sequence, read N- to C-terminus: Integrin alpha-L (1162 aa).

A signal peptide spans 1–23; the sequence is MSFRIAGPRLLLLGLQLFAKAWS. Residues 24 to 1088 lie on the Extracellular side of the membrane; that stretch reads YNLDTRPTQS…DLIHEKEMLH (1065 aa). FG-GAP repeat units follow at residues 28–79 and 80–138; these read TRPT…FCQP and VSLH…GPML. Cys-70 and Cys-77 are joined by a disulfide. The N-linked (GlcNAc...) asparagine glycan is linked to Asn-86. Intrachain disulfides connect Cys-108–Cys-126 and Cys-147–Cys-199. The region spanning 153 to 325 is the VWFA domain; that stretch reads DLVFLFDGSQ…EKLKDLFTDL (173 aa). N-linked (GlcNAc...) asparagine glycans are attached at residues Asn-185 and Asn-270. FG-GAP repeat units lie at residues 336-387, 390-443, 444-504, 505-561, and 565-625; these read NRQD…GATF, QEPL…GGRW, NQTQ…LFEM, VSEL…GLSP, and QRIQ…FSPE. A glycan (N-linked (GlcNAc...) asparagine) is linked at Asn-444. Ca(2+) contacts are provided by Asp-466, Asp-468, Asp-470, Glu-474, Asp-528, Asn-530, Asp-532, Asp-536, Asp-588, Asp-592, and Asp-596. Cysteines 651 and 705 form a disulfide. 4 N-linked (GlcNAc...) asparagine glycosylation sites follow: Asn-668, Asn-696, Asn-724, and Asn-728. The cysteines at positions 768 and 774 are disulfide-linked. Asn-777 carries an N-linked (GlcNAc...) asparagine glycan. Cysteines 841 and 857 form a disulfide. Asn-858, Asn-881, Asn-891, Asn-900, and Asn-928 each carry an N-linked (GlcNAc...) asparagine glycan. 2 disulfides stabilise this stretch: Cys-994–Cys-1010 and Cys-1018–Cys-1049. An N-linked (GlcNAc...) asparagine glycan is attached at Asn-1057. Residues 1089–1109 traverse the membrane as a helical segment; the sequence is VYVLSGIGGLVLLFLIFLALY. The Cytoplasmic segment spans residues 1110 to 1162; sequence KVGFFKRNLKEKMEADGGVPNGSPPEDTDPLAVPGEETKDMGCLEPLRESDKD. Residues 1112-1116 carry the GFFKR motif motif; that stretch reads GFFKR. Positions 1124 to 1162 are disordered; sequence ADGGVPNGSPPEDTDPLAVPGEETKDMGCLEPLRESDKD. Positions 1145–1162 are enriched in basic and acidic residues; that stretch reads EETKDMGCLEPLRESDKD.

The protein belongs to the integrin alpha chain family. In terms of assembly, heterodimer of an alpha and a beta subunit. The ITGAL alpha subunit associates with the ITGB2 beta subunit. Interacts with THBD. Interacts with CD226. Post-translationally, in resting T-cells, up to 40% of surface ITGAL is constitutively phosphorylated. Phosphorylation causes conformational changes needed for ligand binding and is necessary for the activation by some physiological agents. In terms of tissue distribution, leukocytes.

The protein resides in the cell membrane. Integrin ITGAL/ITGB2 is a receptor for ICAM1, ICAM2, ICAM3 and ICAM4. Integrin ITGAL/ITGB2 is a receptor for F11R. Integrin ITGAL/ITGB2 is a receptor for the secreted form of ubiquitin-like protein ISG15; the interaction is mediated by ITGAL. Involved in a variety of immune phenomena including leukocyte-endothelial cell interaction, cytotoxic T-cell mediated killing, and antibody dependent killing by granulocytes and monocytes. Contributes to natural killer cell cytotoxicity. Involved in leukocyte adhesion and transmigration of leukocytes including T-cells and neutrophils. Acts as a platform at the immunological synapse to translate TCR engagement and density of the ITGAL ligand ICAM1 into graded adhesion. Required for generation of common lymphoid progenitor cells in bone marrow, indicating the role in lymphopoiesis. Integrin ITGAL/ITGB2 in association with ICAM3, contributes to apoptotic neutrophil phagocytosis by macrophages. The chain is Integrin alpha-L from Mus musculus (Mouse).